A 185-amino-acid polypeptide reads, in one-letter code: Elongation factor P (185 aa).

The protein belongs to the elongation factor P family.

The protein resides in the cytoplasm. It participates in protein biosynthesis; polypeptide chain elongation. Involved in peptide bond synthesis. Stimulates efficient translation and peptide-bond synthesis on native or reconstituted 70S ribosomes in vitro. Probably functions indirectly by altering the affinity of the ribosome for aminoacyl-tRNA, thus increasing their reactivity as acceptors for peptidyl transferase. This Staphylococcus carnosus (strain TM300) protein is Elongation factor P.